We begin with the raw amino-acid sequence, 630 residues long: Transposase B from transposon PsiTn554 (630 aa).

The region spanning 216–302 (TYFKQLVKRY…ILEGLFSTLH (87 aa)) is the Core-binding (CB) domain. The Tyr recombinase domain occupies 326 to 513 (AKPRFIDEFV…FDETLKNEFT (188 aa)). Active-site residues include arginine 363, lysine 391, histidine 465, arginine 468, and histidine 491. Tyrosine 500 serves as the catalytic O-(3'-phospho-DNA)-tyrosine intermediate.

The protein belongs to the 'phage' integrase family.

In Staphylococcus aureus, this protein is Transposase B from transposon PsiTn554 (tnpB).